The following is a 317-amino-acid chain: 4-hydroxy-3-methylbut-2-enyl diphosphate reductase (317 aa).

C12 contributes to the [4Fe-4S] cluster binding site. The (2E)-4-hydroxy-3-methylbut-2-enyl diphosphate site is built by H41 and H74. Dimethylallyl diphosphate is bound by residues H41 and H74. Residues H41 and H74 each coordinate isopentenyl diphosphate. C97 contacts [4Fe-4S] cluster. H125 is a binding site for (2E)-4-hydroxy-3-methylbut-2-enyl diphosphate. H125 is a binding site for dimethylallyl diphosphate. Position 125 (H125) interacts with isopentenyl diphosphate. E127 serves as the catalytic Proton donor. T168 is a binding site for (2E)-4-hydroxy-3-methylbut-2-enyl diphosphate. C198 provides a ligand contact to [4Fe-4S] cluster. Residues S226, S227, N228, and S270 each contribute to the (2E)-4-hydroxy-3-methylbut-2-enyl diphosphate site. The dimethylallyl diphosphate site is built by S226, S227, N228, and S270. Isopentenyl diphosphate contacts are provided by S226, S227, N228, and S270.

The protein belongs to the IspH family. Homodimer. It depends on [4Fe-4S] cluster as a cofactor.

The enzyme catalyses isopentenyl diphosphate + 2 oxidized [2Fe-2S]-[ferredoxin] + H2O = (2E)-4-hydroxy-3-methylbut-2-enyl diphosphate + 2 reduced [2Fe-2S]-[ferredoxin] + 2 H(+). It catalyses the reaction dimethylallyl diphosphate + 2 oxidized [2Fe-2S]-[ferredoxin] + H2O = (2E)-4-hydroxy-3-methylbut-2-enyl diphosphate + 2 reduced [2Fe-2S]-[ferredoxin] + 2 H(+). Its pathway is isoprenoid biosynthesis; dimethylallyl diphosphate biosynthesis; dimethylallyl diphosphate from (2E)-4-hydroxy-3-methylbutenyl diphosphate: step 1/1. The protein operates within isoprenoid biosynthesis; isopentenyl diphosphate biosynthesis via DXP pathway; isopentenyl diphosphate from 1-deoxy-D-xylulose 5-phosphate: step 6/6. Functionally, catalyzes the conversion of 1-hydroxy-2-methyl-2-(E)-butenyl 4-diphosphate (HMBPP) into a mixture of isopentenyl diphosphate (IPP) and dimethylallyl diphosphate (DMAPP). Acts in the terminal step of the DOXP/MEP pathway for isoprenoid precursor biosynthesis. The sequence is that of 4-hydroxy-3-methylbut-2-enyl diphosphate reductase from Serratia proteamaculans (strain 568).